A 649-amino-acid polypeptide reads, in one-letter code: Thioredoxin reductase 1, cytoplasmic (649 aa).

Met1 is subject to N-acetylmethionine. The segment at 1-49 (MGCAEGKAVAAAAPTELQTKGKNGDGRRRSAKDHHPGKTLPENPAGFTS) is disordered. Positions 22 to 36 (KNGDGRRRSAKDHHP) are enriched in basic and acidic residues. The Glutaredoxin domain maps to 56–156 (RALLQAYIDG…KLLKMNGPED (101 aa)). The tract at residues 145 to 149 (LQKLL) is required for interaction with ESR1 and ESR2. Residues 172-173 (SG), 192-193 (DF), 208-209 (TC), and 213-217 (GCIPK) contribute to the FAD site. A disulfide bridge connects residues Cys209 and Cys214. The residue at position 218 (Lys218) is an N6-succinyllysine. Position 281 is a phosphotyrosine (Tyr281). Residues 281–282 (YG) and Thr311 each bind FAD. NADP(+) is bound by residues Arg316, 348-354 (ASYVALE), 371-372 (RS), Arg376, 376-378 (RGF), 442-443 (GR), and Lys465. Tyr350 lines the FAD pocket. Residues Asp484, 491–493 (ELT), and His622 contribute to the FAD site. Position 491 (Glu491) interacts with NADP(+). His622 acts as the Proton acceptor in catalysis. Positions 647–648 (CU) form a cross-link, cysteinyl-selenocysteine (Cys-Sec). A non-standard amino acid (selenocysteine) is located at residue Sec648.

Belongs to the class-I pyridine nucleotide-disulfide oxidoreductase family. As to quaternary structure, homodimer. Interacts with HERC5. Interacts with ESR1 and ESR2. FAD is required as a cofactor. Post-translationally, the N-terminus is blocked. In terms of processing, ISGylated. Expressed predominantly in Leydig cells (at protein level). Also expressed in ovary, spleen, heart, liver, kidney and pancreas and in a number of cancer cell lines. In terms of tissue distribution, widely expressed with highest levels in kidney, testis, uterus, ovary, prostate, placenta and fetal liver.

The protein resides in the cytoplasm. The protein localises to the nucleus. The catalysed reaction is [thioredoxin]-dithiol + NADP(+) = [thioredoxin]-disulfide + NADPH + H(+). It carries out the reaction H2O2 + NADPH + H(+) = NADP(+) + 2 H2O. Its function is as follows. Reduces disulfideprotein thioredoxin (Trx) to its dithiol-containing form. Homodimeric flavoprotein involved in the regulation of cellular redox reactions, growth and differentiation. Contains a selenocysteine residue at the C-terminal active site that is essential for catalysis. Also has reductase activity on hydrogen peroxide (H2O2). Induces actin and tubulin polymerization, leading to formation of cell membrane protrusions. In terms of biological role, enhances the transcriptional activity of estrogen receptors ESR1 and ESR2. Functionally, enhances the transcriptional activity of the estrogen receptor ESR2 only. Mediates cell death induced by a combination of interferon-beta and retinoic acid. In Homo sapiens (Human), this protein is Thioredoxin reductase 1, cytoplasmic.